Reading from the N-terminus, the 287-residue chain is ATP synthase gamma chain (287 aa).

This sequence belongs to the ATPase gamma chain family. In terms of assembly, F-type ATPases have 2 components, CF(1) - the catalytic core - and CF(0) - the membrane proton channel. CF(1) has five subunits: alpha(3), beta(3), gamma(1), delta(1), epsilon(1). CF(0) has three main subunits: a, b and c.

It localises to the cell inner membrane. Its function is as follows. Produces ATP from ADP in the presence of a proton gradient across the membrane. The gamma chain is believed to be important in regulating ATPase activity and the flow of protons through the CF(0) complex. This is ATP synthase gamma chain from Klebsiella pneumoniae (strain 342).